A 568-amino-acid chain; its full sequence is PCNA-interacting partner (568 aa).

Residues 442–555 (QIPTCVHPAP…RNNKAVSKKL (114 aa)) form a disordered region. Polar residues predominate over residues 488 to 500 (NAWNQTGGKSTQP). Over residues 515–527 (ANRECTEQGREEN) the composition is skewed to basic and acidic residues.

Belongs to the PARI family.

It localises to the cytoplasm. The protein resides in the nucleus. Functionally, required to suppress inappropriate homologous recombination, thereby playing a central role DNA repair and in the maintenance of genomic stability. This Danio rerio (Zebrafish) protein is PCNA-interacting partner (parpbp).